Consider the following 240-residue polypeptide: Biotin--[acetyl-CoA-carboxylase] ligase (240 aa).

The region spanning 1–176 (MLARTDSTNA…AFARWQAQLD (176 aa)) is the BPL/LPL catalytic domain. Biotin contacts are provided by residues 7–9 (STN), Q30, 34–36 (RGR), and K102.

The protein belongs to the biotin--protein ligase family.

It catalyses the reaction biotin + L-lysyl-[protein] + ATP = N(6)-biotinyl-L-lysyl-[protein] + AMP + diphosphate + H(+). In terms of biological role, activates biotin to form biotinyl-5'-adenylate and transfers the biotin moiety to biotin-accepting proteins. This is Biotin--[acetyl-CoA-carboxylase] ligase (birA) from Paracoccus denitrificans.